Consider the following 402-residue polypeptide: uncharacterized protein (402 aa).

Residues 1-44 (MLEKNLLPEILLAIHMPLNKGLTRVKAIVIIIVVIIAVIAGVVG) form the signal peptide. Residues 53–79 (NSVTTSSSSTTTSSSLSSTSISSSTTN) are disordered.

Belongs to the bacterial solute-binding protein 1 family. WtpA subfamily.

This is an uncharacterized protein from Saccharolobus solfataricus (strain ATCC 35092 / DSM 1617 / JCM 11322 / P2) (Sulfolobus solfataricus).